The chain runs to 144 residues: Large ribosomal subunit protein uL15 (144 aa).

The segment at 1 to 48 is disordered; it reads MQLNNLKPAAGSKHAKRRVGRGIGSGLGKTAGRGHKGQKSRSGGFHKV. Over residues 21-31 the composition is skewed to gly residues; the sequence is RGIGSGLGKTA.

The protein belongs to the universal ribosomal protein uL15 family. Part of the 50S ribosomal subunit.

Its function is as follows. Binds to the 23S rRNA. The chain is Large ribosomal subunit protein uL15 from Cupriavidus taiwanensis (strain DSM 17343 / BCRC 17206 / CCUG 44338 / CIP 107171 / LMG 19424 / R1) (Ralstonia taiwanensis (strain LMG 19424)).